The chain runs to 1447 residues: Bud site selection protein 4 (1447 aa).

Residues 1–16 show a composition bias toward basic and acidic residues; the sequence is MHDAESTVDSLLKEID. 2 disordered regions span residues 1-37 and 57-76; these read MHDA…TPHN and NTRS…KMST. A Phosphoserine modification is found at serine 10. Composition is skewed to polar residues over residues 22-32 and 59-76; these read TKSNITQNGSE and RSNA…KMST. Residues serine 78, serine 81, serine 91, serine 96, and serine 167 each carry the phosphoserine modification. The interval 272–316 is disordered; the sequence is NLPSKLLNTSNNSHSDSRSPTASVEDLNISTNLPGADSSQNNPVT. The span at 277-316 shows a compositional bias: polar residues; it reads LLNTSNNSHSDSRSPTASVEDLNISTNLPGADSSQNNPVT. Position 365 is a phosphothreonine (threonine 365). At serine 367 the chain carries Phosphoserine. The interval 444-588 is disordered; sequence HQESEHANEQ…VEENEESEHV (145 aa). Positions 475–494 are enriched in basic and acidic residues; it reads EFQRNSKDGEEYRIVQHEES. The span at 497-509 shows a compositional bias: polar residues; that stretch reads GQRTKSSEENIIN. At serine 511 the chain carries Phosphoserine. A compositionally biased stretch (polar residues) spans 538–548; it reads SSSCEDQSVSE. Residues 549-580 are compositionally biased toward basic and acidic residues; the sequence is ARNKDSIEEKEVETKDENIETEKDESEYHKVE. Phosphoserine is present on serine 616. Positions 649–664 are enriched in polar residues; sequence NSQFSQQSSITTASTV. Positions 649–672 are disordered; the sequence is NSQFSQQSSITTASTVDSKKDNGS. Positions 768 to 879 are interaction with IQG1; it reads EHENIPLSTH…SLWESSYELK (112 aa). Phosphoserine is present on residues serine 805 and serine 811. Residues 1302–1413 enclose the PH domain; the sequence is NIYKEGYLLQ…WYNKLQEVVE (112 aa).

The protein belongs to the BUD4 family. As to quaternary structure, interacts with AXL1, IQG1 and SEC3. In terms of processing, phosphorylated by CDC28.

It localises to the bud neck. Its function is as follows. Required for establishment of the axial budding pattern in haploid cells. Cooperates with other bud site selection proteins to recognize a spatial landmark during mitosis and they subsequently become a landmark for downstream polarity establishment factors that coordinate axial budding and cytokinesis. Involved in the septin organization at the bud neck. This chain is Bud site selection protein 4 (BUD4), found in Saccharomyces cerevisiae (strain YJM789) (Baker's yeast).